A 754-amino-acid chain; its full sequence is Elongation factor G-2, mitochondrial (754 aa).

The tr-type G domain occupies 63–340; sequence DKLRNIGISA…GVVSFLPSPN (278 aa). Residues 72-79, 139-143, and 193-196 each bind GTP; these read AHIDSGKT, DTPGH, and NKLD.

The protein belongs to the TRAFAC class translation factor GTPase superfamily. Classic translation factor GTPase family. EF-G/EF-2 subfamily. Expressed in cotyledons and adult leaves at the same levels.

The protein resides in the mitochondrion. It functions in the pathway protein biosynthesis; polypeptide chain elongation. Functionally, mitochondrial GTPase that catalyzes the GTP-dependent ribosomal translocation step during translation elongation. During this step, the ribosome changes from the pre-translocational (PRE) to the post-translocational (POST) state as the newly formed A-site-bound peptidyl-tRNA and P-site-bound deacylated tRNA move to the P and E sites, respectively. Catalyzes the coordinated movement of the two tRNA molecules, the mRNA and conformational changes in the ribosome. The polypeptide is Elongation factor G-2, mitochondrial (MEFG2) (Arabidopsis thaliana (Mouse-ear cress)).